Consider the following 289-residue polypeptide: Acetylglutamate kinase (289 aa).

Substrate-binding positions include 65 to 66 (GG), Arg-87, and Asn-187.

Belongs to the acetylglutamate kinase family. ArgB subfamily.

The protein localises to the cytoplasm. It catalyses the reaction N-acetyl-L-glutamate + ATP = N-acetyl-L-glutamyl 5-phosphate + ADP. It participates in amino-acid biosynthesis; L-arginine biosynthesis; N(2)-acetyl-L-ornithine from L-glutamate: step 2/4. In terms of biological role, catalyzes the ATP-dependent phosphorylation of N-acetyl-L-glutamate. In Chromobacterium violaceum (strain ATCC 12472 / DSM 30191 / JCM 1249 / CCUG 213 / NBRC 12614 / NCIMB 9131 / NCTC 9757 / MK), this protein is Acetylglutamate kinase.